Reading from the N-terminus, the 366-residue chain is Cobalt-precorrin-5B C(1)-methyltransferase (366 aa).

Belongs to the CbiD family.

It carries out the reaction Co-precorrin-5B + S-adenosyl-L-methionine = Co-precorrin-6A + S-adenosyl-L-homocysteine. It participates in cofactor biosynthesis; adenosylcobalamin biosynthesis; cob(II)yrinate a,c-diamide from sirohydrochlorin (anaerobic route): step 6/10. Functionally, catalyzes the methylation of C-1 in cobalt-precorrin-5B to form cobalt-precorrin-6A. The sequence is that of Cobalt-precorrin-5B C(1)-methyltransferase from Paraburkholderia phymatum (strain DSM 17167 / CIP 108236 / LMG 21445 / STM815) (Burkholderia phymatum).